The primary structure comprises 1738 residues: Sodium leak channel NALCN (1738 aa).

Residues 1 to 36 lie on the Cytoplasmic side of the membrane; the sequence is MLKRKQSSRVEAQPVTDFGPDESLSDNADILWINKP. The chain crosses the membrane as a helical span at residues 37-57; that stretch reads WVHSLLRICAIISVISVCMNT. Residues 58–65 are Extracellular-facing; the sequence is PMTFEHYP. A helical membrane pass occupies residues 66–90; the sequence is PLQYVTFTLDTLLMFLYTAEMIAKM. The Cytoplasmic segment spans residues 91–106; it reads HIRGIVKGDSSYVKDR. Residues 107-129 form a helical membrane-spanning segment; it reads WCVFDGFMVFCLWVSLVLQVFEI. Over 130–137 the chain is Extracellular; sequence ADIVDQMS. The helical; Voltage-sensor transmembrane segment at 138–158 threads the bilayer; the sequence is PWGMLRIPRPLIMIRAFRIYF. At 159-173 the chain is on the cytoplasmic side; the sequence is RFELPRTRITNILKR. The helical transmembrane segment at 174–199 threads the bilayer; sequence SGEQIWSVSIFLLFFLLLYGILGVQM. The Extracellular portion of the chain corresponds to 200–269; it reads FGTFTYHCVV…YSGFNEIGTS (70 aa). Disulfide bonds link C207-C239 and C229-C245. 2 N-linked (GlcNAc...) asparagine glycosylation sites follow: N210 and N216. The segment at residues 270–289 is an intramembrane region (pore-forming); sequence IFTVYEAASQEGWVFLMYRA. The Extracellular portion of the chain corresponds to 290-294; sequence IDSFP. The chain crosses the membrane as a helical span at residues 295–322; the sequence is RWRSYFYFITLIFFLAWLVKNVFIAVII. Over 323–382 the chain is Cytoplasmic; sequence ETFAEIRVQFQQMWGSRSSTTSTATTQMFHEDAAGGWQLVAVDVNKPQGRAPACLQKMMR. A helical membrane pass occupies residues 383–403; the sequence is SSVFHMFILSMVTVDVIVAAS. Over 404–416 the chain is Extracellular; sequence NYYKGENFRRQYD. Residues 417–439 traverse the membrane as a helical segment; that stretch reads EFYLAEVAFTVLFDLEALLKIWC. Topologically, residues 440–447 are cytoplasmic; the sequence is LGFTGYIS. A helical membrane pass occupies residues 448 to 468; sequence SSLHKFELLLVIGTTLHVYPD. Topologically, residues 469–472 are extracellular; sequence LYHS. A helical; Voltage-sensor membrane pass occupies residues 473-492; sequence QFTYFQVLRVVRLIKISPAL. Topologically, residues 493–502 are cytoplasmic; it reads EDFVYKIFGP. The chain crosses the membrane as a helical span at residues 503-530; that stretch reads GKKLGSLVVFTASLLIVMSAISLQMFCF. Topologically, residues 531-543 are extracellular; it reads VEELDRFTTFPRA. The segment at residues 544–563 is an intramembrane region (pore-forming); sequence FMSMFQILTQEGWVDVMDQT. The Extracellular segment spans residues 564–569; sequence LNAVGH. Residues 570 to 599 traverse the membrane as a helical segment; sequence MWAPVVAIYFILYHLFATLILLSLFVAVIL. Topologically, residues 600–886 are cytoplasmic; sequence DNLELDEDLK…QLYDLLGLVT (287 aa). The disordered stretch occupies residues 762-785; it reads QERRSLRHGSNSQRISRGKSLETL. Residues 795–830 adopt a coiled-coil conformation; that stretch reads YRNAQREDSEIKMIQEKKEQAEMKRKVQEEELRENH. Residues 887–906 traverse the membrane as a helical segment; sequence YLDWVMIIVTICSCISMMFE. At 907–915 the chain is on the extracellular side; that stretch reads SPFRRVMHA. Residues 916–939 form a helical membrane-spanning segment; the sequence is PTLQIAEYVFVIFMSIELNLKIMA. Residues 940-947 lie on the Cytoplasmic side of the membrane; the sequence is DGLFFTPT. The chain crosses the membrane as a helical span at residues 948 to 972; sequence AVIRDFGGVMDIFIYLVSLIFLCWM. Over 973–980 the chain is Extracellular; sequence PQNVPAES. A helical; Voltage-sensor membrane pass occupies residues 981–1003; that stretch reads GAQLLMVLRCLRPLRIFKLVPQM. Topologically, residues 1004–1015 are cytoplasmic; sequence RKVVRELFSGFK. Residues 1016 to 1039 form a helical membrane-spanning segment; sequence EIFLVSILLLTLMLVFASFGVQLF. Over 1040-1104 the chain is Extracellular; the sequence is AGKLAKCNDP…NFNFDNVGNA (65 aa). The cysteines at positions 1046 and 1057 are disulfide-linked. An N-linked (GlcNAc...) asparagine glycan is attached at N1064. An intramembrane region (pore-forming) is located at residues 1105–1124; it reads MLALFEVLSLKGWVEVRDVI. Over 1125–1129 the chain is Extracellular; the sequence is IHRVG. A helical transmembrane segment spans residues 1130-1159; it reads PIHGIYIHVFVFLGCMIGLTLFVGVVIANF. At 1160 to 1210 the chain is on the cytoplasmic side; that stretch reads NENKGTALLTVDQRRWEDLKSRLKIAQPLHLPPRPDNDGFRAKMYDITQHP. The chain crosses the membrane as a helical span at residues 1211-1227; the sequence is FFKRTIALLVLAQSVLL. Topologically, residues 1228 to 1236 are extracellular; that stretch reads SVKWDVEDP. The helical transmembrane segment at 1237–1260 threads the bilayer; sequence VTVPLATMSVVFTFIFVLEVTMKI. Over 1261-1271 the chain is Cytoplasmic; sequence IAMSPAGFWQS. The chain crosses the membrane as a helical span at residues 1272–1293; the sequence is RRNRYDLLVTSLGVVWVVLHFA. Residues 1294 to 1296 lie on the Extracellular side of the membrane; the sequence is LLN. Residues 1297-1318 form a helical; Voltage-sensor membrane-spanning segment; that stretch reads AYTYMMGACVIVFRFFSICGKH. The Cytoplasmic segment spans residues 1319–1331; the sequence is VTLKMLLLTVVVS. A helical membrane pass occupies residues 1332-1357; sequence MYKSFFIIVGMFLLLLCYAFAGVVLF. Residues 1358–1378 lie on the Extracellular side of the membrane; that stretch reads GTVKYGENINRHANFSSAGKA. An intramembrane region (pore-forming) is located at residues 1379–1398; sequence ITVLFRIVTGEDWNKIMHDC. At 1399–1420 the chain is on the extracellular side; it reads MVQPPFCTPDEFTYWATDCGNY. The cysteines at positions 1405 and 1417 are disulfide-linked. The helical transmembrane segment at 1421–1447 threads the bilayer; sequence AGALMYFCSFYVIIAYIMLNLLVAIIV. Over 1448–1738 the chain is Cytoplasmic; sequence ENFSLFYSTE…DESGDDLLDI (291 aa). Residues 1611-1678 are disordered; it reads PPSIETTQPS…QWRLPSAPKP (68 aa). Polar residues predominate over residues 1613–1632; it reads SIETTQPSEDTNANSQDNSM. The segment covering 1633 to 1648 has biased composition (low complexity); that stretch reads QPETSSQQQLLSPTLS.

This sequence belongs to the NALCN family. Found in a complex with NALCN, UNC79, UNC80 and NACL1; these auxiliary subunits are indispensable for the function of NALCN channel. Interacts with UNC80; required for the NALCN activation/inhibition by GPCRs in neurons. Found in a complex with NALCN, UNC79 and UNC80; UNC80 bridges NALCN to UNC79. Interacts with CHRM3. Phosphorylated on tyrosine residues.

The protein resides in the cell membrane. It catalyses the reaction Na(+)(in) = Na(+)(out). With respect to regulation, inhibited by low micromolar concentrations of Gd(3+) and high micromolar concentrations of verapamil. Insensitive to tetrodotoxin (TTX) and potentiated by low external Ca(2+) concentration. Functionally, voltage-gated ion channel responsible for the resting Na(+) permeability that controls neuronal excitability. NALCN channel functions as a multi-protein complex, which consists at least of NALCN, NALF1, UNC79 and UNC80. NALCN is the voltage-sensing, pore-forming subunit of the NALCN channel complex. NALCN channel complex is constitutively active and conducts monovalent cations but is blocked by physiological concentrations of extracellular divalent cations. In addition to its role in regulating neuronal excitability, is required for normal respiratory rhythm, systemic osmoregulation by controlling the serum sodium concentration and in the regulation of the intestinal pace-making activity in the interstitial cells of Cajal. NALCN channel is also activated by neuropeptides such as neurotensin and substance P (SP) through a SRC family kinases-dependent pathway. In addition, NALCN activity is enhanced/modulated by several GPCRs, such as CHRM3. In Homo sapiens (Human), this protein is Sodium leak channel NALCN.